Consider the following 329-residue polypeptide: GDP-mannose transporter (329 aa).

The Cytoplasmic portion of the chain corresponds to 1–13; that stretch reads MSELKVDTGRLSH. The helical transmembrane segment at 14–34 threads the bilayer; sequence IANSGPMSILAYCASSILMTV. The Lumenal segment spans residues 35 to 44; the sequence is TNKCVVGSDK. The chain crosses the membrane as a helical span at residues 45 to 65; the sequence is FNMLFVMLFAQSLVCVTALVL. Residues 66-79 are Cytoplasmic-facing; the sequence is LKALGYVQYRPLNK. Residues 80 to 100 form a helical membrane-spanning segment; the sequence is VDVKNWLLISVLLVLMTYTSS. The Lumenal segment spans residues 101-109; sequence RALKYLAVP. Residues 110-130 form a helical membrane-spanning segment; that stretch reads IYTIFKNLTIILIAYGEVLFF. Over 131–133 the chain is Cytoplasmic; the sequence is GGR. The chain crosses the membrane as a helical span at residues 134 to 154; that stretch reads VTAMELSSFLLIVLSSVVATL. At 155–174 the chain is on the lumenal side; it reads GDQQALAKKPLAAAVESILG. Residues 175–195 traverse the membrane as a helical segment; it reads LNVGYFWMFTNCICSALFVLI. Topologically, residues 196-214 are cytoplasmic; the sequence is MRKRIALTKFKDFDTMFYN. Residues 215-235 traverse the membrane as a helical segment; sequence NILSLPLLMLASFMFEDWGAA. Over 236–245 the chain is Lumenal; sequence NIARNLTKDY. Residue asparagine 240 is glycosylated (N-linked (GlcNAc...) asparagine). The chain crosses the membrane as a helical span at residues 246–266; it reads IIIMIISGLASVGISYCSGWC. The Cytoplasmic portion of the chain corresponds to 267-273; that stretch reads VRVTSST. The chain crosses the membrane as a helical span at residues 274–294; sequence TYSMVGALNKLPIALSGLLFF. Over 295–298 the chain is Lumenal; it reads DAPK. The helical transmembrane segment at 299-319 threads the bilayer; that stretch reads NFLSIFSIFLGFLSGIVYAVA. Over 320 to 329 the chain is Cytoplasmic; it reads KQKKQSQPAN.

It belongs to the TPT transporter family. SLC35D subfamily. In terms of assembly, homooligomer.

The protein localises to the golgi apparatus membrane. It is found in the cytoplasmic vesicle membrane. The protein resides in the endoplasmic reticulum membrane. In terms of biological role, involved in the import of GDP-mannose from the cytoplasm into the Golgi lumen. The polypeptide is GDP-mannose transporter (VRG4) (Eremothecium gossypii (strain ATCC 10895 / CBS 109.51 / FGSC 9923 / NRRL Y-1056) (Yeast)).